Consider the following 156-residue polypeptide: Protein-export protein SecB (156 aa).

The protein belongs to the SecB family. In terms of assembly, homotetramer, a dimer of dimers. One homotetramer interacts with 1 SecA dimer.

It is found in the cytoplasm. In terms of biological role, one of the proteins required for the normal export of preproteins out of the cell cytoplasm. It is a molecular chaperone that binds to a subset of precursor proteins, maintaining them in a translocation-competent state. It also specifically binds to its receptor SecA. The chain is Protein-export protein SecB from Aeromonas hydrophila subsp. hydrophila (strain ATCC 7966 / DSM 30187 / BCRC 13018 / CCUG 14551 / JCM 1027 / KCTC 2358 / NCIMB 9240 / NCTC 8049).